We begin with the raw amino-acid sequence, 311 residues long: Phosphoribosylaminoimidazole-succinocarboxamide synthase (311 aa).

This sequence belongs to the SAICAR synthetase family.

It catalyses the reaction 5-amino-1-(5-phospho-D-ribosyl)imidazole-4-carboxylate + L-aspartate + ATP = (2S)-2-[5-amino-1-(5-phospho-beta-D-ribosyl)imidazole-4-carboxamido]succinate + ADP + phosphate + 2 H(+). The protein operates within purine metabolism; IMP biosynthesis via de novo pathway; 5-amino-1-(5-phospho-D-ribosyl)imidazole-4-carboxamide from 5-amino-1-(5-phospho-D-ribosyl)imidazole-4-carboxylate: step 1/2. This Azoarcus sp. (strain BH72) protein is Phosphoribosylaminoimidazole-succinocarboxamide synthase.